The chain runs to 431 residues: D-tagatose-1,6-bisphosphate aldolase subunit KbaZ (431 aa).

It belongs to the GatZ/KbaZ family. KbaZ subfamily. In terms of assembly, forms a complex with KbaY.

The protein operates within carbohydrate metabolism; D-tagatose 6-phosphate degradation; D-glyceraldehyde 3-phosphate and glycerone phosphate from D-tagatose 6-phosphate: step 2/2. Its function is as follows. Component of the tagatose-1,6-bisphosphate aldolase KbaYZ that is required for full activity and stability of the Y subunit. Could have a chaperone-like function for the proper and stable folding of KbaY. When expressed alone, KbaZ does not show any aldolase activity. The chain is D-tagatose-1,6-bisphosphate aldolase subunit KbaZ from Citrobacter koseri (strain ATCC BAA-895 / CDC 4225-83 / SGSC4696).